The following is a 298-amino-acid chain: Probable tRNA(His) guanylyltransferase (298 aa).

Asp-58, Gly-59, and Asp-105 together coordinate Mg(2+). GTP contacts are provided by residues 58–63 (DGRNFH) and 104–105 (SD).

It belongs to the tRNA(His) guanylyltransferase family. As to quaternary structure, homotetramer. Interacts with MFN1 and MFN2; functions as a guanyl-nucleotide exchange factor/GEF for MFN2 and also probably MFN1. Mg(2+) is required as a cofactor. In terms of tissue distribution, expressed in many tissues.

The protein localises to the cytoplasm. Its subcellular location is the mitochondrion outer membrane. It catalyses the reaction a 5'-end ribonucleotide-tRNA(His) + GTP + ATP + H2O = a 5'-end phospho-guanosine-ribonucleotide-tRNA(His) + AMP + 2 diphosphate + H(+). Adds a GMP to the 5'-end of tRNA(His) after transcription and RNase P cleavage. This step is essential for proper recognition of the tRNA and for the fidelity of protein synthesis. Also functions as a guanyl-nucleotide exchange factor/GEF for the MFN1 and MFN2 mitofusins thereby regulating mitochondrial fusion. By regulating both mitochondrial dynamics and bioenergetic function, it contributes to cell survival following oxidative stress. The polypeptide is Probable tRNA(His) guanylyltransferase (THG1L) (Homo sapiens (Human)).